The following is a 261-amino-acid chain: Cytochrome c oxidase subunit 3 (261 aa).

Residues 1–15 (MAHQAHAYHMVDPSP) lie on the Mitochondrial matrix side of the membrane. The chain crosses the membrane as a helical span at residues 16-34 (WPITGATAALLVTSGLAAW). The Mitochondrial intermembrane portion of the chain corresponds to 35–40 (FHFNSM). Residues 41–66 (ILILMGLTLLLLTMYQWWRDIIREST) form a helical membrane-spanning segment. At 67 to 72 (FQGHHT) the chain is on the mitochondrial matrix side. A helical transmembrane segment spans residues 73-105 (LPVQKSLRYGMILFITSEVFFFLGFFWAFYHSS). The Mitochondrial intermembrane segment spans residues 106-128 (LAPTPELGGLWPPTGITPLDPFE). Residues 129–152 (VPLLNTAVLLASGITVTWAHHSLM) traverse the membrane as a helical segment. Topologically, residues 153–155 (EGQ) are mitochondrial matrix. A helical membrane pass occupies residues 156-183 (RKEAIQSLFITVLLGLYFTALQATEYYE). Residues 184–190 (SPFTIAD) are Mitochondrial intermembrane-facing. The chain crosses the membrane as a helical span at residues 191 to 223 (GAYGSTFFVATGFHGLHVIIGSTFLIVCLVRQT). Topologically, residues 224 to 232 (QYHFTSNHH) are mitochondrial matrix. The chain crosses the membrane as a helical span at residues 233–256 (FGFEAAAWYWHFVDVVWLFLYVSI). At 257-261 (YWWGS) the chain is on the mitochondrial intermembrane side.

This sequence belongs to the cytochrome c oxidase subunit 3 family. As to quaternary structure, component of the cytochrome c oxidase (complex IV, CIV), a multisubunit enzyme composed of 14 subunits. The complex is composed of a catalytic core of 3 subunits MT-CO1, MT-CO2 and MT-CO3, encoded in the mitochondrial DNA, and 11 supernumerary subunits COX4I, COX5A, COX5B, COX6A, COX6B, COX6C, COX7A, COX7B, COX7C, COX8 and NDUFA4, which are encoded in the nuclear genome. The complex exists as a monomer or a dimer and forms supercomplexes (SCs) in the inner mitochondrial membrane with NADH-ubiquinone oxidoreductase (complex I, CI) and ubiquinol-cytochrome c oxidoreductase (cytochrome b-c1 complex, complex III, CIII), resulting in different assemblies (supercomplex SCI(1)III(2)IV(1) and megacomplex MCI(2)III(2)IV(2)).

It localises to the mitochondrion inner membrane. It carries out the reaction 4 Fe(II)-[cytochrome c] + O2 + 8 H(+)(in) = 4 Fe(III)-[cytochrome c] + 2 H2O + 4 H(+)(out). Component of the cytochrome c oxidase, the last enzyme in the mitochondrial electron transport chain which drives oxidative phosphorylation. The respiratory chain contains 3 multisubunit complexes succinate dehydrogenase (complex II, CII), ubiquinol-cytochrome c oxidoreductase (cytochrome b-c1 complex, complex III, CIII) and cytochrome c oxidase (complex IV, CIV), that cooperate to transfer electrons derived from NADH and succinate to molecular oxygen, creating an electrochemical gradient over the inner membrane that drives transmembrane transport and the ATP synthase. Cytochrome c oxidase is the component of the respiratory chain that catalyzes the reduction of oxygen to water. Electrons originating from reduced cytochrome c in the intermembrane space (IMS) are transferred via the dinuclear copper A center (CU(A)) of subunit 2 and heme A of subunit 1 to the active site in subunit 1, a binuclear center (BNC) formed by heme A3 and copper B (CU(B)). The BNC reduces molecular oxygen to 2 water molecules using 4 electrons from cytochrome c in the IMS and 4 protons from the mitochondrial matrix. The chain is Cytochrome c oxidase subunit 3 (MT-CO3) from Latimeria chalumnae (Coelacanth).